The following is a 596-amino-acid chain: DNA mismatch repair protein MutL (596 aa).

It belongs to the DNA mismatch repair MutL/HexB family.

This protein is involved in the repair of mismatches in DNA. It is required for dam-dependent methyl-directed DNA mismatch repair. May act as a 'molecular matchmaker', a protein that promotes the formation of a stable complex between two or more DNA-binding proteins in an ATP-dependent manner without itself being part of a final effector complex. This Leptospira borgpetersenii serovar Hardjo-bovis (strain L550) protein is DNA mismatch repair protein MutL.